A 452-amino-acid polypeptide reads, in one-letter code: F-box only protein 47 (452 aa).

The 51-residue stretch at 41–91 folds into the F-box domain; sequence FGNFKALPLEIFQIILKYLSVKDISMLSMVSKTVSQHIINYISTSSGSKRL.

Part of a SCF (SKP1-cullin-F-box) protein ligase complex. Widely expressed, with highest levels in kidney, liver and pancreas. Down-regulated in tumors.

Its function is as follows. Probably recognizes and binds to some phosphorylated proteins and promotes their ubiquitination and degradation. The protein is F-box only protein 47 of Homo sapiens (Human).